The sequence spans 203 residues: Histidine biosynthesis bifunctional protein HisIE (203 aa).

The segment at M1–F114 is phosphoribosyl-AMP cyclohydrolase. Residues L115–Q203 form a phosphoribosyl-ATP pyrophosphohydrolase region.

The protein in the N-terminal section; belongs to the PRA-CH family. It in the C-terminal section; belongs to the PRA-PH family.

Its subcellular location is the cytoplasm. The catalysed reaction is 1-(5-phospho-beta-D-ribosyl)-ATP + H2O = 1-(5-phospho-beta-D-ribosyl)-5'-AMP + diphosphate + H(+). It carries out the reaction 1-(5-phospho-beta-D-ribosyl)-5'-AMP + H2O = 1-(5-phospho-beta-D-ribosyl)-5-[(5-phospho-beta-D-ribosylamino)methylideneamino]imidazole-4-carboxamide. Its pathway is amino-acid biosynthesis; L-histidine biosynthesis; L-histidine from 5-phospho-alpha-D-ribose 1-diphosphate: step 2/9. It participates in amino-acid biosynthesis; L-histidine biosynthesis; L-histidine from 5-phospho-alpha-D-ribose 1-diphosphate: step 3/9. This is Histidine biosynthesis bifunctional protein HisIE (hisI) from Shigella flexneri.